Reading from the N-terminus, the 247-residue chain is Ribonuclease PH (247 aa).

Phosphate contacts are provided by residues arginine 96 and 134-136 (GTR).

The protein belongs to the RNase PH family. In terms of assembly, homohexameric ring arranged as a trimer of dimers.

It catalyses the reaction tRNA(n+1) + phosphate = tRNA(n) + a ribonucleoside 5'-diphosphate. Functionally, phosphorolytic 3'-5' exoribonuclease that plays an important role in tRNA 3'-end maturation. Removes nucleotide residues following the 3'-CCA terminus of tRNAs; can also add nucleotides to the ends of RNA molecules by using nucleoside diphosphates as substrates, but this may not be physiologically important. Probably plays a role in initiation of 16S rRNA degradation (leading to ribosome degradation) during starvation. This chain is Ribonuclease PH, found in Tropheryma whipplei (strain TW08/27) (Whipple's bacillus).